Reading from the N-terminus, the 146-residue chain is Large ribosomal subunit protein uL16 (146 aa).

The protein belongs to the universal ribosomal protein uL16 family. As to quaternary structure, part of the 50S ribosomal subunit.

Its function is as follows. Binds 23S rRNA and is also seen to make contacts with the A and possibly P site tRNAs. The chain is Large ribosomal subunit protein uL16 from Lactobacillus acidophilus (strain ATCC 700396 / NCK56 / N2 / NCFM).